We begin with the raw amino-acid sequence, 593 residues long: Aspartate--tRNA(Asp/Asn) ligase (593 aa).

Residue Glu-182 participates in L-aspartate binding. The segment at 206-209 (QLFK) is aspartate. Residue Arg-228 participates in L-aspartate binding. Residues 228-230 (RDE) and Gln-237 contribute to the ATP site. L-aspartate is bound at residue His-455. Glu-489 contacts ATP. L-aspartate is bound at residue Arg-496. 541–544 (GLDR) is an ATP binding site.

It belongs to the class-II aminoacyl-tRNA synthetase family. Type 1 subfamily. In terms of assembly, homodimer.

It is found in the cytoplasm. It catalyses the reaction tRNA(Asx) + L-aspartate + ATP = L-aspartyl-tRNA(Asx) + AMP + diphosphate. Its function is as follows. Aspartyl-tRNA synthetase with relaxed tRNA specificity since it is able to aspartylate not only its cognate tRNA(Asp) but also tRNA(Asn). Reaction proceeds in two steps: L-aspartate is first activated by ATP to form Asp-AMP and then transferred to the acceptor end of tRNA(Asp/Asn). The chain is Aspartate--tRNA(Asp/Asn) ligase from Geotalea uraniireducens (strain Rf4) (Geobacter uraniireducens).